The sequence spans 361 residues: Cyclin-Y-like protein 2 (361 aa).

The Cyclin N-terminal domain occupies Met204–Asn286.

Belongs to the cyclin family. Cyclin Y subfamily.

This chain is Cyclin-Y-like protein 2 (CCNYL2), found in Homo sapiens (Human).